The primary structure comprises 309 residues: Porphobilinogen deaminase (309 aa).

Cys-244 is subject to S-(dipyrrolylmethanemethyl)cysteine.

Belongs to the HMBS family. Monomer. The cofactor is dipyrromethane.

The catalysed reaction is 4 porphobilinogen + H2O = hydroxymethylbilane + 4 NH4(+). Its pathway is porphyrin-containing compound metabolism; protoporphyrin-IX biosynthesis; coproporphyrinogen-III from 5-aminolevulinate: step 2/4. In terms of biological role, tetrapolymerization of the monopyrrole PBG into the hydroxymethylbilane pre-uroporphyrinogen in several discrete steps. This Listeria innocua serovar 6a (strain ATCC BAA-680 / CLIP 11262) protein is Porphobilinogen deaminase.